Consider the following 83-residue polypeptide: ATP synthase subunit c (83 aa).

2 helical membrane-spanning segments follow: residues 10–30 (IAVA…FGLL) and 52–72 (MFIV…IALF).

It belongs to the ATPase C chain family. In terms of assembly, F-type ATPases have 2 components, F(1) - the catalytic core - and F(0) - the membrane proton channel. F(1) has five subunits: alpha(3), beta(3), gamma(1), delta(1), epsilon(1). F(0) has three main subunits: a(1), b(2) and c(10-14). The alpha and beta chains form an alternating ring which encloses part of the gamma chain. F(1) is attached to F(0) by a central stalk formed by the gamma and epsilon chains, while a peripheral stalk is formed by the delta and b chains.

It localises to the cell inner membrane. In terms of biological role, f(1)F(0) ATP synthase produces ATP from ADP in the presence of a proton or sodium gradient. F-type ATPases consist of two structural domains, F(1) containing the extramembraneous catalytic core and F(0) containing the membrane proton channel, linked together by a central stalk and a peripheral stalk. During catalysis, ATP synthesis in the catalytic domain of F(1) is coupled via a rotary mechanism of the central stalk subunits to proton translocation. Key component of the F(0) channel; it plays a direct role in translocation across the membrane. A homomeric c-ring of between 10-14 subunits forms the central stalk rotor element with the F(1) delta and epsilon subunits. In Shewanella loihica (strain ATCC BAA-1088 / PV-4), this protein is ATP synthase subunit c.